We begin with the raw amino-acid sequence, 408 residues long: LL-diaminopimelate aminotransferase (408 aa).

The substrate site is built by Tyr15 and Gly42. Pyridoxal 5'-phosphate contacts are provided by residues Tyr72, 108-109 (SK), Tyr132, Asn187, Tyr218, and 246-248 (SFS). Substrate-binding residues include Lys109, Tyr132, and Asn187. Lys249 is modified (N6-(pyridoxal phosphate)lysine). 2 residues coordinate pyridoxal 5'-phosphate: Arg257 and Asn292. Substrate contacts are provided by Asn292 and Arg388.

It belongs to the class-I pyridoxal-phosphate-dependent aminotransferase family. LL-diaminopimelate aminotransferase subfamily. As to quaternary structure, homodimer. It depends on pyridoxal 5'-phosphate as a cofactor.

The catalysed reaction is (2S,6S)-2,6-diaminopimelate + 2-oxoglutarate = (S)-2,3,4,5-tetrahydrodipicolinate + L-glutamate + H2O + H(+). Its pathway is amino-acid biosynthesis; L-lysine biosynthesis via DAP pathway; LL-2,6-diaminopimelate from (S)-tetrahydrodipicolinate (aminotransferase route): step 1/1. Involved in the synthesis of meso-diaminopimelate (m-DAP or DL-DAP), required for both lysine and peptidoglycan biosynthesis. Catalyzes the direct conversion of tetrahydrodipicolinate to LL-diaminopimelate. This is LL-diaminopimelate aminotransferase from Prochlorococcus marinus (strain SARG / CCMP1375 / SS120).